Reading from the N-terminus, the 537-residue chain is Syncytin-2 (537 aa).

The first 15 residues, 1 to 15, serve as a signal peptide directing secretion; it reads MGLLLLVLILTPLLA. The Extracellular portion of the chain corresponds to 16-478; that stretch reads AYRHPDFPLL…GWLNWEGTWK (463 aa). A CXXC motif is present at residues 43–46; it reads CWLC. 3 disulfide bridges follow: cysteine 43/cysteine 46, cysteine 43/cysteine 439, and cysteine 431/cysteine 438. Asparagine 133, asparagine 146, asparagine 177, asparagine 220, asparagine 241, asparagine 247, asparagine 312, and asparagine 332 each carry an N-linked (GlcNAc...) asparagine glycan. A fusion peptide region spans residues 354–374; that stretch reads FIPLLAGLGILAGTGTGIAGI. The CKS-17 motif lies at 414 to 430; the sequence is LQNRRGLDMLTAAQGGI. The short motif at 431-439 is the CX6CC element; the sequence is CLALDEKCC. A glycan (N-linked (GlcNAc...) asparagine) is linked at asparagine 443. A helical membrane pass occupies residues 479–499; that stretch reads WFSWVLPFIGPLVSLLLLLLF. The Cytoplasmic portion of the chain corresponds to 500–537; sequence GPCLLNLITQFVSSRLQAIKLQTNGAGCRPRNIQESPF.

This sequence belongs to the gamma type-C retroviral envelope protein family. HERV class-I FRD env subfamily. The surface and transmembrane proteins form a heterodimer. They are attached by non-covalent interactions or by a labile interchain disulfide bond. Specific enzymatic cleavages in vivo yield the mature SU and TM proteins. In terms of processing, the CXXC motif is highly conserved across a broad range of retroviral envelope proteins. It is thought to participate in the formation of a labile disulfide bond possibly with the CX6CC motif present in the transmembrane protein.

It is found in the virion. The protein resides in the cell membrane. In terms of biological role, this endogenous retroviral envelope protein has retained its original fusogenic properties and participates in trophoblast fusion and the formation of a syncytium during placenta morphogenesis. The interaction with MFSD2A is apparently important for this process. Its function is as follows. Endogenous envelope proteins may have kept, lost or modified their original function during evolution but this one can still make pseudotypes with MLV, HIV-1 or SIV-1 virions and confer infectivity. Retroviral envelope proteins mediate receptor recognition and membrane fusion during early infection. The surface protein mediates receptor recognition, while the transmembrane protein anchors the envelope heterodimer to the viral membrane through one transmembrane domain. The other hydrophobic domain, called fusion peptide, mediates fusion of the viral membrane with the target cell membrane. In Macaca fascicularis (Crab-eating macaque), this protein is Syncytin-2 (ERVFRD-1).